Here is a 257-residue protein sequence, read N- to C-terminus: Type III pantothenate kinase (257 aa).

An ATP-binding site is contributed by 6–13; that stretch reads DCGNTNTV. 107–110 lines the substrate pocket; the sequence is GPDR. Residue Asp109 is the Proton acceptor of the active site. Residue Asp129 participates in K(+) binding. Thr132 lines the ATP pocket. Thr184 lines the substrate pocket.

It belongs to the type III pantothenate kinase family. Homodimer. It depends on NH4(+) as a cofactor. Requires K(+) as cofactor.

Its subcellular location is the cytoplasm. It carries out the reaction (R)-pantothenate + ATP = (R)-4'-phosphopantothenate + ADP + H(+). It functions in the pathway cofactor biosynthesis; coenzyme A biosynthesis; CoA from (R)-pantothenate: step 1/5. Catalyzes the phosphorylation of pantothenate (Pan), the first step in CoA biosynthesis. This chain is Type III pantothenate kinase, found in Cereibacter sphaeroides (strain ATCC 17029 / ATH 2.4.9) (Rhodobacter sphaeroides).